The chain runs to 116 residues: NADH-quinone oxidoreductase subunit A (116 aa).

A run of 3 helical transmembrane segments spans residues 3-23 (FTLLVVVILTAIALVAVALGI), 61-81 (FAILFLMFDVETVFLFPWAVV), and 85-105 (LGVYGLFSILFFLVILVLGLA).

The protein belongs to the complex I subunit 3 family. In terms of assembly, NDH-1 is composed of 14 different subunits. Subunits NuoA, H, J, K, L, M, N constitute the membrane sector of the complex.

The protein resides in the cell inner membrane. The enzyme catalyses a quinone + NADH + 5 H(+)(in) = a quinol + NAD(+) + 4 H(+)(out). NDH-1 shuttles electrons from NADH, via FMN and iron-sulfur (Fe-S) centers, to quinones in the respiratory chain. The immediate electron acceptor for the enzyme in this species is believed to be a menaquinone. Couples the redox reaction to proton translocation (for every two electrons transferred, four hydrogen ions are translocated across the cytoplasmic membrane), and thus conserves the redox energy in a proton gradient. This is NADH-quinone oxidoreductase subunit A from Phocaeicola vulgatus (strain ATCC 8482 / DSM 1447 / JCM 5826 / CCUG 4940 / NBRC 14291 / NCTC 11154) (Bacteroides vulgatus).